A 1275-amino-acid polypeptide reads, in one-letter code: Histone-lysine N-methyltransferase PRDM16 (1275 aa).

The span at 1-10 (MRSKARARKL) shows a compositional bias: basic residues. Positions 1–66 (MRSKARARKL…SEDFTPKEGS (66 aa)) are disordered. Residues 82–211 (PDFELRESSI…PGEELLVHVK (130 aa)) form the SET domain. Residues 230–255 (FRCDECDELFQCRLDLRRHKKYACSS) form a C2H2-type 1; degenerate zinc finger. 5 consecutive C2H2-type zinc fingers follow at residues 282–304 (HECK…MIVH), 310–332 (YKCD…QMSH), 338–361 (FECE…RSQH), 367–389 (HACP…KHIH), and 395–417 (FICE…KRMH). The segment at 424-446 (IKCKDCGQMFSTTSSLNKHRRFC) adopts a C2H2-type 7; atypical zinc-finger fold. Disordered stretches follow at residues 592 to 658 (VKNR…VPPG) and 789 to 838 (APKV…GVSE). The segment covering 610–625 (TTTGTDLDTTTGTGSD) has biased composition (low complexity). 2 stretches are compositionally biased toward basic and acidic residues: residues 631 to 648 (DSDR…ESKP) and 821 to 835 (REPR…RKPG). The segment at 680 to 1038 (EEQLLTASGA…KHEHEGAPVS (359 aa)) is interaction with CTBP1, CTBP2 and ZNF516. The segment at 740–1275 (PFTDRALAHN…SGAFNPINHL (536 aa)) is mediates interaction with SKI and regulation of TGF-beta signaling. 3 C2H2-type zinc fingers span residues 951-973 (YTCR…LRTH), 979-1002 (YRCK…RNIH), and 1008-1030 (FKCH…LKKH). Disordered stretches follow at residues 1027 to 1065 (LKKH…HALL) and 1084 to 1169 (EMNQ…MGFD). The segment covering 1038–1058 (SQHSGVLTNHLGTSASSPTSE) has biased composition (polar residues). A compositionally biased stretch (acidic residues) spans 1117–1133 (DVEEEEEEELEEEDDDS).

Belongs to the PRDM16 family. Interacts with CEBPA, CEBPB and CEBPD; the interaction is direct. Interacts with PPARG and PPARA; controls brown adipocytes. Interacts with CTBP1 and CTBP2; represses the expression of WAT-specific genes. Interacts with PPARGC1A and PPARGC1B; interaction with PPARGC1A or PPARGC1B activates the transcription of BAT-specific gene. Interacts with HDAC1, SKI and SMAD2; the interaction with SKI promotes the recruitment of SMAD3-HDAC1 complex on the promoter of TGF-beta target genes. Interacts with ZNF516; the interaction is direct and may play a role in the transcription of brown adipose tissue-specific gene. Enriched in BAT compared to WAT. Detected in heart, lung, kidney and brain. Expressed in nuclei of cardiomyocytes.

It localises to the nucleus. The protein resides in the cytoplasm. The catalysed reaction is L-lysyl(9)-[histone H3] + S-adenosyl-L-methionine = N(6)-methyl-L-lysyl(9)-[histone H3] + S-adenosyl-L-homocysteine + H(+). Functionally, binds DNA and functions as a transcriptional regulator. Displays histone methyltransferase activity and monomethylates 'Lys-9' of histone H3 (H3K9me1) in vitro. Probably catalyzes the monomethylation of free histone H3 in the cytoplasm which is then transported to the nucleus and incorporated into nucleosomes where SUV39H methyltransferases use it as a substrate to catalyze histone H3 'Lys-9' trimethylation. Likely to be one of the primary histone methyltransferases along with MECOM/PRDM3 that direct cytoplasmic H3K9me1 methylation. Functions in the differentiation of brown adipose tissue (BAT) which is specialized in dissipating chemical energy in the form of heat in response to cold or excess feeding while white adipose tissue (WAT) is specialized in the storage of excess energy and the control of systemic metabolism. Together with CEBPB, regulates the differentiation of myoblastic precursors into brown adipose cells. Functions as a repressor of TGF-beta signaling. The polypeptide is Histone-lysine N-methyltransferase PRDM16 (Mus musculus (Mouse)).